Consider the following 125-residue polypeptide: MVVEQKEQEPIVKMRDRNVNAAAHSALARGIEALNEGEVTEETEEIRKLDTQLDHLNDYMSKMEERLKAHNDRMMETLKQQKEEREKRRRSFHERMSQNQSEDEEFKKQMSSILKRVQSVKRTEK.

A coiled-coil region spans residues 46–95 (IRKLDTQLDHLNDYMSKMEERLKAHNDRMMETLKQQKEEREKRRRSFHER). Residues 79-125 (KQQKEEREKRRRSFHERMSQNQSEDEEFKKQMSSILKRVQSVKRTEK) form a disordered region.

Expressed in many epithelial tissues, including the pharynx, intestine, excretory canal and hypodermis.

It is found in the cell junction. The protein resides in the cytoplasm. It localises to the cytoskeleton. Dynamic component of the endotube in intestinal cells, interacts with intermediate filament and regulates intestinal lumen morphology. This is Bublin coiled-coil protein from Caenorhabditis elegans.